We begin with the raw amino-acid sequence, 103 residues long: Large ribosomal subunit protein uL24 (103 aa).

Belongs to the universal ribosomal protein uL24 family. As to quaternary structure, part of the 50S ribosomal subunit.

One of two assembly initiator proteins, it binds directly to the 5'-end of the 23S rRNA, where it nucleates assembly of the 50S subunit. In terms of biological role, one of the proteins that surrounds the polypeptide exit tunnel on the outside of the subunit. This is Large ribosomal subunit protein uL24 from Latilactobacillus sakei subsp. sakei (strain 23K) (Lactobacillus sakei subsp. sakei).